A 108-amino-acid chain; its full sequence is Nucleoid-associated protein Csal_1459 (108 aa).

Residues 84 to 93 show a composition bias toward basic and acidic residues; that stretch reads EETSRGRMEE. The segment at 84–108 is disordered; that stretch reads EETSRGRMEEATEGMNLPPGFKMPF.

It belongs to the YbaB/EbfC family. In terms of assembly, homodimer.

It is found in the cytoplasm. Its subcellular location is the nucleoid. Binds to DNA and alters its conformation. May be involved in regulation of gene expression, nucleoid organization and DNA protection. This Chromohalobacter salexigens (strain ATCC BAA-138 / DSM 3043 / CIP 106854 / NCIMB 13768 / 1H11) protein is Nucleoid-associated protein Csal_1459.